A 156-amino-acid polypeptide reads, in one-letter code: Large ribosomal subunit protein uL22 (156 aa).

Belongs to the universal ribosomal protein uL22 family. Part of the 50S ribosomal subunit.

Functionally, this protein binds specifically to 23S rRNA. It makes multiple contacts with different domains of the 23S rRNA in the assembled 50S subunit and ribosome. Its function is as follows. The globular domain of the protein is located near the polypeptide exit tunnel on the outside of the subunit, while an extended beta-hairpin is found that lines the wall of the exit tunnel in the center of the 70S ribosome. This chain is Large ribosomal subunit protein uL22, found in Sulfolobus acidocaldarius (strain ATCC 33909 / DSM 639 / JCM 8929 / NBRC 15157 / NCIMB 11770).